The chain runs to 468 residues: Glutamine synthetase (468 aa).

The region spanning 14 to 98 (HDVKYVDLRF…ILCDVYEPST (85 aa)) is the GS beta-grasp domain. Residues 106 to 468 (PRGIAKAAEK…PIEYKMYYSV (363 aa)) form the GS catalytic domain. Mg(2+) contacts are provided by glutamate 131 and glutamate 133. Residue glutamate 209 coordinates ATP. Residues glutamate 214 and glutamate 221 each coordinate Mg(2+). L-glutamate contacts are provided by residues 265–266 (NG) and glycine 266. Residue histidine 270 participates in Mg(2+) binding. ATP contacts are provided by residues 272-274 (HQS) and serine 274. 3 residues coordinate L-glutamate: arginine 322, glutamate 328, and arginine 340. Arginine 340, arginine 345, and lysine 353 together coordinate ATP. Glutamate 358 contributes to the Mg(2+) binding site. Arginine 360 is a binding site for L-glutamate. Tyrosine 398 carries the O-AMP-tyrosine modification.

It belongs to the glutamine synthetase family. Oligomer of 12 subunits arranged in the form of two hexameric ring. Mg(2+) is required as a cofactor.

The protein resides in the cytoplasm. The enzyme catalyses L-glutamate + NH4(+) + ATP = L-glutamine + ADP + phosphate + H(+). With respect to regulation, the activity of this enzyme could be controlled by adenylation under conditions of abundant glutamine. In terms of biological role, catalyzes the ATP-dependent biosynthesis of glutamine from glutamate and ammonia. The chain is Glutamine synthetase from Azospirillum brasilense.